Reading from the N-terminus, the 529-residue chain is ATP synthase subunit alpha (529 aa).

Residue 173-180 (GDRQTGKT) participates in ATP binding.

Belongs to the ATPase alpha/beta chains family. As to quaternary structure, F-type ATPases have 2 components, CF(1) - the catalytic core - and CF(0) - the membrane proton channel. CF(1) has five subunits: alpha(3), beta(3), gamma(1), delta(1), epsilon(1). CF(0) has three main subunits: a(1), b(2) and c(9-12). The alpha and beta chains form an alternating ring which encloses part of the gamma chain. CF(1) is attached to CF(0) by a central stalk formed by the gamma and epsilon chains, while a peripheral stalk is formed by the delta and b chains.

The protein resides in the cell membrane. It carries out the reaction ATP + H2O + 4 H(+)(in) = ADP + phosphate + 5 H(+)(out). Its function is as follows. Produces ATP from ADP in the presence of a proton gradient across the membrane. The alpha chain is a regulatory subunit. The protein is ATP synthase subunit alpha of Streptomyces avermitilis (strain ATCC 31267 / DSM 46492 / JCM 5070 / NBRC 14893 / NCIMB 12804 / NRRL 8165 / MA-4680).